Reading from the N-terminus, the 245-residue chain is 1-(5-phosphoribosyl)-5-[(5-phosphoribosylamino)methylideneamino] imidazole-4-carboxamide isomerase (245 aa).

Asp-8 functions as the Proton acceptor in the catalytic mechanism. Catalysis depends on Asp-130, which acts as the Proton donor.

The protein belongs to the HisA/HisF family.

It is found in the cytoplasm. It carries out the reaction 1-(5-phospho-beta-D-ribosyl)-5-[(5-phospho-beta-D-ribosylamino)methylideneamino]imidazole-4-carboxamide = 5-[(5-phospho-1-deoxy-D-ribulos-1-ylimino)methylamino]-1-(5-phospho-beta-D-ribosyl)imidazole-4-carboxamide. Its pathway is amino-acid biosynthesis; L-histidine biosynthesis; L-histidine from 5-phospho-alpha-D-ribose 1-diphosphate: step 4/9. The sequence is that of 1-(5-phosphoribosyl)-5-[(5-phosphoribosylamino)methylideneamino] imidazole-4-carboxamide isomerase from Teredinibacter turnerae (strain ATCC 39867 / T7901).